The primary structure comprises 409 residues: MEGPASSKPLKDKTNPWGPLIILGILIRAGVSVQLDSPHQVSNVTWRVTNLMTGQTANATSLLGTMTEAFPKLYFDLCDLMGDDWDETGLGCRTPGGRKRARTFDFYVCPGHTVPTGCGGPREGYCGKWGCETTGQAYWKPSSSWDLISLKRGNTPKDQGPCYDSSVSSGVLGATPGGRCNPLVLEFTDAGRKASWDAPKVWGLRLYRSTGTDPVTRFSLTRQVLDIGPRVPIGSNPVTTDQLPLSRPVQTMPPRPLQPPPPGAASIVPETAPPPQQPGAGDRLLNLVDGAYQALNLTNPDKIQECWLCLVSGPPYYEGVVVLGTYFNHTIALKEKCCFYADHTGLVRDSMAKLRKRLTQRQKLFESSRGWFEGSSNRSPWFTTLISAIMGSLIILLLLLILLIWTLYS.

The signal sequence occupies residues 1–32 (MEGPASSKPLKDKTNPWGPLIILGILIRAGVS). Over 33-384 (VQLDSPHQVS…SSNRSPWFTT (352 aa)) the chain is Virion surface. Residues Asn43 and Asn58 are each glycosylated (N-linked (GlcNAc...) asparagine; by host). Positions 232 to 280 (PIGSNPVTTDQLPLSRPVQTMPPRPLQPPPPGAASIVPETAPPPQQPGA) are disordered. Over residues 251–263 (TMPPRPLQPPPPG) the composition is skewed to pro residues. N-linked (GlcNAc...) asparagine; by host glycans are attached at residues Asn296 and Asn328. Residues 385–405 (LISAIMGSLIILLLLLILLIW) traverse the membrane as a helical segment. Topologically, residues 406 to 409 (TLYS) are intravirion.

Homooligomer. Forms heterooligomers with mouse EPOR, probably via their respective transmembrane domains. Forms covalent heterodimers with mouse MST1R isoform sf-Stk, probably via disulfide bonds.

The protein localises to the host endoplasmic reticulum membrane. It localises to the host cell membrane. It is found in the virion membrane. In terms of biological role, this envelope-like membrane glycoprotein is responsible for ligand-independent activation of the erythropoietin receptor EPOR leading to the abnormally rapid proliferation of erythroid precursor cells. In the first stage of Friend disease, constitutive activation of EPOR by gp55 causes uncontrolled, polyclonal proliferation of infected erythroblasts, leading to polycythemia (massive increase in the number of mature red cells). Host susceptibility to SSFV-induced erythroblastosis depends on the expression of the truncated isoform of MST1R receptor tyrosine kinase (MST1R isoform sf-Stk). Interaction with SSFV gp 55 results in constitutive tyrosine phosphorylation and activation of MST1R isoform sf-Stk. This Mus musculus (Mouse) protein is Glycoprotein 55 (env).